The chain runs to 347 residues: MKNLLGSTIKDLENVALDYGQAGFRGRQIYNWIYNYRNKKKNIDQIEVLPLDFRKRLKDDGFKVSDLSIHERNLANDGTLKLLLSTEDNESIECVGIPTEKRLTACLSSQVGCPMDCKFCATGKEGLKRSLKVSEILDQILFIENEMNRKVTNIVFMGMGEPLLNIDDLLLSIRSINEDLKISQRKITVSTVAVPKMINKLSAKSFKILGNCQFTLAVSLHAPNQKIRETIIPSAKNYEIENIIEDCKQYVRDTGRRVSFEYLMLRGVNDKIEHANELSHLLKGFQCHVNLIQYNQIDEVEFQRACLKDLQSFQSRLSHNGIAVSLRKSRGLDKNAACGQLRQNARN.

Catalysis depends on glutamate 93, which acts as the Proton acceptor. Residues 99–333 (TEKRLTACLS…VSLRKSRGLD (235 aa)) form the Radical SAM core domain. A disulfide bridge connects residues cysteine 106 and cysteine 338. Residues cysteine 113, cysteine 117, and cysteine 120 each contribute to the [4Fe-4S] cluster site. Residues 160–161 (GE), serine 190, 219–221 (SLH), and asparagine 295 contribute to the S-adenosyl-L-methionine site. Cysteine 338 functions as the S-methylcysteine intermediate in the catalytic mechanism.

Belongs to the radical SAM superfamily. RlmN family. [4Fe-4S] cluster is required as a cofactor.

The protein resides in the cytoplasm. The enzyme catalyses adenosine(2503) in 23S rRNA + 2 reduced [2Fe-2S]-[ferredoxin] + 2 S-adenosyl-L-methionine = 2-methyladenosine(2503) in 23S rRNA + 5'-deoxyadenosine + L-methionine + 2 oxidized [2Fe-2S]-[ferredoxin] + S-adenosyl-L-homocysteine. It carries out the reaction adenosine(37) in tRNA + 2 reduced [2Fe-2S]-[ferredoxin] + 2 S-adenosyl-L-methionine = 2-methyladenosine(37) in tRNA + 5'-deoxyadenosine + L-methionine + 2 oxidized [2Fe-2S]-[ferredoxin] + S-adenosyl-L-homocysteine. In terms of biological role, specifically methylates position 2 of adenine 2503 in 23S rRNA and position 2 of adenine 37 in tRNAs. The polypeptide is Probable dual-specificity RNA methyltransferase RlmN (Prochlorococcus marinus (strain MIT 9301)).